The chain runs to 408 residues: Putative transporter AmpG 2 (408 aa).

12 helical membrane passes run Tyr10–Leu30, Ile49–Leu69, Tyr84–Asn104, Phe109–Leu129, Phe154–Trp174, Val177–Leu197, Trp224–Met244, Leu261–Leu281, Ala294–Tyr311, Ile315–Phe337, Ile353–Tyr373, and Leu378–Ile398.

The protein belongs to the major facilitator superfamily.

Its subcellular location is the cell inner membrane. In Rickettsia felis (strain ATCC VR-1525 / URRWXCal2) (Rickettsia azadi), this protein is Putative transporter AmpG 2 (ampG2).